We begin with the raw amino-acid sequence, 1072 residues long: Carbamoyl phosphate synthase large chain (1072 aa).

Residues 1–401 form a carboxyphosphate synthetic domain region; that stretch reads MPKRLDINTI…SLLKAVRSLE (401 aa). ATP contacts are provided by Arg129, Arg169, Gly175, Gly176, Lys208, Ile210, Glu215, Gly241, Val242, His243, Gln284, and Glu298. One can recognise an ATP-grasp 1 domain in the interval 133 to 327; sequence RTLMQELNEP…IAKLAAKIAV (195 aa). Mg(2+) contacts are provided by Gln284, Glu298, and Asn300. Mn(2+) contacts are provided by Gln284, Glu298, and Asn300. Residues 402–546 are oligomerization domain; the sequence is LGIYHLELDH…YSTYADENES (145 aa). Residues 547 to 929 are carbamoyl phosphate synthetic domain; it reads IVTDRKSVVV…ALYKGLVASG (383 aa). Positions 671-861 constitute an ATP-grasp 2 domain; that stretch reads EAALTKLGIP…MANVATKVIL (191 aa). ATP contacts are provided by Arg707, Arg746, Glu752, Gly777, Val778, His779, Ser780, Gln820, and Glu832. Mg(2+)-binding residues include Gln820, Glu832, and Asn834. Gln820, Glu832, and Asn834 together coordinate Mn(2+). One can recognise an MGS-like domain in the interval 930–1072; it reads INIPTHGSVI…QTKRHEVVHA (143 aa). The interval 930–1072 is allosteric domain; sequence INIPTHGSVI…QTKRHEVVHA (143 aa).

It belongs to the CarB family. Composed of two chains; the small (or glutamine) chain promotes the hydrolysis of glutamine to ammonia, which is used by the large (or ammonia) chain to synthesize carbamoyl phosphate. Tetramer of heterodimers (alpha,beta)4. It depends on Mg(2+) as a cofactor. Mn(2+) is required as a cofactor.

It carries out the reaction hydrogencarbonate + L-glutamine + 2 ATP + H2O = carbamoyl phosphate + L-glutamate + 2 ADP + phosphate + 2 H(+). It catalyses the reaction hydrogencarbonate + NH4(+) + 2 ATP = carbamoyl phosphate + 2 ADP + phosphate + 2 H(+). The protein operates within amino-acid biosynthesis; L-arginine biosynthesis; carbamoyl phosphate from bicarbonate: step 1/1. Its pathway is pyrimidine metabolism; UMP biosynthesis via de novo pathway; (S)-dihydroorotate from bicarbonate: step 1/3. Its function is as follows. Large subunit of the glutamine-dependent carbamoyl phosphate synthetase (CPSase). CPSase catalyzes the formation of carbamoyl phosphate from the ammonia moiety of glutamine, carbonate, and phosphate donated by ATP, constituting the first step of 2 biosynthetic pathways, one leading to arginine and/or urea and the other to pyrimidine nucleotides. The large subunit (synthetase) binds the substrates ammonia (free or transferred from glutamine from the small subunit), hydrogencarbonate and ATP and carries out an ATP-coupled ligase reaction, activating hydrogencarbonate by forming carboxy phosphate which reacts with ammonia to form carbamoyl phosphate. This chain is Carbamoyl phosphate synthase large chain, found in Bacillus thuringiensis (strain Al Hakam).